The following is a 158-amino-acid chain: S-ribosylhomocysteine lyase (158 aa).

Residues His-54, His-58, and Cys-125 each contribute to the Fe cation site.

It belongs to the LuxS family. In terms of assembly, homodimer. It depends on Fe cation as a cofactor.

It carries out the reaction S-(5-deoxy-D-ribos-5-yl)-L-homocysteine = (S)-4,5-dihydroxypentane-2,3-dione + L-homocysteine. Its function is as follows. Involved in the synthesis of autoinducer 2 (AI-2) which is secreted by bacteria and is used to communicate both the cell density and the metabolic potential of the environment. The regulation of gene expression in response to changes in cell density is called quorum sensing. Catalyzes the transformation of S-ribosylhomocysteine (RHC) to homocysteine (HC) and 4,5-dihydroxy-2,3-pentadione (DPD). This chain is S-ribosylhomocysteine lyase, found in Lactococcus lactis subsp. cremoris (strain MG1363).